The sequence spans 227 residues: Cytochrome c oxidase subunit 2 (227 aa).

The Mitochondrial intermembrane segment spans residues 1–14 (MAYPFQLGLQDATS). Residues 15–45 (PIMEELLHFHDHTLMIVFLISSLVLYIISLM) form a helical membrane-spanning segment. Residues 46-59 (LTTKLTHTSTMDAQ) are Mitochondrial matrix-facing. A helical membrane pass occupies residues 60-87 (EVETVWTILPAIILILIALPSLRILYMM). At 88–227 (DEINNPSLTV…YFETWSALMV (140 aa)) the chain is on the mitochondrial intermembrane side. Cu cation contacts are provided by His161, Cys196, Glu198, Cys200, His204, and Met207. Glu198 is a Mg(2+) binding site. Residue Tyr218 is modified to Phosphotyrosine.

The protein belongs to the cytochrome c oxidase subunit 2 family. In terms of assembly, component of the cytochrome c oxidase (complex IV, CIV), a multisubunit enzyme composed of 14 subunits. The complex is composed of a catalytic core of 3 subunits MT-CO1, MT-CO2 and MT-CO3, encoded in the mitochondrial DNA, and 11 supernumerary subunits COX4I, COX5A, COX5B, COX6A, COX6B, COX6C, COX7A, COX7B, COX7C, COX8 and NDUFA4, which are encoded in the nuclear genome. The complex exists as a monomer or a dimer and forms supercomplexes (SCs) in the inner mitochondrial membrane with NADH-ubiquinone oxidoreductase (complex I, CI) and ubiquinol-cytochrome c oxidoreductase (cytochrome b-c1 complex, complex III, CIII), resulting in different assemblies (supercomplex SCI(1)III(2)IV(1) and megacomplex MCI(2)III(2)IV(2)). Found in a complex with TMEM177, COA6, COX18, COX20, SCO1 and SCO2. Interacts with TMEM177 in a COX20-dependent manner. Interacts with COX20. Interacts with COX16. Cu cation is required as a cofactor.

The protein resides in the mitochondrion inner membrane. It carries out the reaction 4 Fe(II)-[cytochrome c] + O2 + 8 H(+)(in) = 4 Fe(III)-[cytochrome c] + 2 H2O + 4 H(+)(out). In terms of biological role, component of the cytochrome c oxidase, the last enzyme in the mitochondrial electron transport chain which drives oxidative phosphorylation. The respiratory chain contains 3 multisubunit complexes succinate dehydrogenase (complex II, CII), ubiquinol-cytochrome c oxidoreductase (cytochrome b-c1 complex, complex III, CIII) and cytochrome c oxidase (complex IV, CIV), that cooperate to transfer electrons derived from NADH and succinate to molecular oxygen, creating an electrochemical gradient over the inner membrane that drives transmembrane transport and the ATP synthase. Cytochrome c oxidase is the component of the respiratory chain that catalyzes the reduction of oxygen to water. Electrons originating from reduced cytochrome c in the intermembrane space (IMS) are transferred via the dinuclear copper A center (CU(A)) of subunit 2 and heme A of subunit 1 to the active site in subunit 1, a binuclear center (BNC) formed by heme A3 and copper B (CU(B)). The BNC reduces molecular oxygen to 2 water molecules using 4 electrons from cytochrome c in the IMS and 4 protons from the mitochondrial matrix. The chain is Cytochrome c oxidase subunit 2 (MT-CO2) from Canis mesomelas elongae (Eastern African black-backed jackal).